Reading from the N-terminus, the 478-residue chain is UDP-N-acetylmuramate--L-alanine ligase (478 aa).

122–128 (GTHGKTT) serves as a coordination point for ATP.

Belongs to the MurCDEF family.

Its subcellular location is the cytoplasm. The enzyme catalyses UDP-N-acetyl-alpha-D-muramate + L-alanine + ATP = UDP-N-acetyl-alpha-D-muramoyl-L-alanine + ADP + phosphate + H(+). It participates in cell wall biogenesis; peptidoglycan biosynthesis. Functionally, cell wall formation. The chain is UDP-N-acetylmuramate--L-alanine ligase from Stenotrophomonas maltophilia (strain R551-3).